Here is a 439-residue protein sequence, read N- to C-terminus: Glutamyl-tRNA reductase (439 aa).

Substrate is bound by residues 46 to 49 (TCNR), Ser-111, 116 to 118 (EGE), and Gln-122. The Nucleophile role is filled by Cys-47. 191–196 (GTGAYA) provides a ligand contact to NADP(+).

Belongs to the glutamyl-tRNA reductase family. Homodimer.

It carries out the reaction (S)-4-amino-5-oxopentanoate + tRNA(Glu) + NADP(+) = L-glutamyl-tRNA(Glu) + NADPH + H(+). The protein operates within porphyrin-containing compound metabolism; protoporphyrin-IX biosynthesis; 5-aminolevulinate from L-glutamyl-tRNA(Glu): step 1/2. Functionally, catalyzes the NADPH-dependent reduction of glutamyl-tRNA(Glu) to glutamate 1-semialdehyde (GSA). This Clavibacter michiganensis subsp. michiganensis (strain NCPPB 382) protein is Glutamyl-tRNA reductase.